We begin with the raw amino-acid sequence, 154 residues long: Cyclin-dependent protein kinase inhibitor SMR11 (154 aa).

Residues methionine 1–isoleucine 44 form a disordered region. Over residues proline 27–serine 38 the composition is skewed to low complexity.

Interacts with CYCB2-4.

Probable cyclin-dependent protein kinase (CDK) inhibitor that functions as a repressor of mitosis in the endoreduplication cell cycle. This Arabidopsis thaliana (Mouse-ear cress) protein is Cyclin-dependent protein kinase inhibitor SMR11.